The following is a 216-amino-acid chain: uncharacterized protein (216 aa).

A helical membrane pass occupies residues 1–21 (MTIVHFVGSLFFFFFFSYIFF).

The protein resides in the membrane. This is an uncharacterized protein from Saccharomyces cerevisiae (strain ATCC 204508 / S288c) (Baker's yeast).